A 72-amino-acid polypeptide reads, in one-letter code: Large ribosomal subunit protein uL29 (72 aa).

This sequence belongs to the universal ribosomal protein uL29 family.

This is Large ribosomal subunit protein uL29 from Prochlorococcus marinus (strain MIT 9312).